A 692-amino-acid chain; its full sequence is Single-strand DNA endonuclease ASTE1 (692 aa).

It belongs to the asteroid family.

Structure-specific DNA endonuclease that specifically cleaves single-stranded DNA and 3' overhang DNA. This Danio rerio (Zebrafish) protein is Single-strand DNA endonuclease ASTE1 (aste1a).